Reading from the N-terminus, the 161-residue chain is Nucleotide-binding protein Tcr_1902 (161 aa).

The protein belongs to the YajQ family.

Nucleotide-binding protein. This chain is Nucleotide-binding protein Tcr_1902, found in Hydrogenovibrio crunogenus (strain DSM 25203 / XCL-2) (Thiomicrospira crunogena).